The sequence spans 295 residues: Serpentine receptor class gamma-53 (295 aa).

A run of 6 helical transmembrane segments spans residues I7–S27, V39–F61, F121–Y141, C173–V193, M211–T230, and I241–I261.

Belongs to the nematode receptor-like protein srg family.

The protein localises to the membrane. This Caenorhabditis elegans protein is Serpentine receptor class gamma-53 (srg-53).